We begin with the raw amino-acid sequence, 180 residues long: Cell division protein SepF (180 aa).

The interval 21-40 (LDDDYDDGRAVGRDDRRAMH) is disordered. Residues 27–40 (DGRAVGRDDRRAMH) are compositionally biased toward basic and acidic residues.

Belongs to the SepF family. In terms of assembly, homodimer. Interacts with FtsZ.

It is found in the cytoplasm. Cell division protein that is part of the divisome complex and is recruited early to the Z-ring. Probably stimulates Z-ring formation, perhaps through the cross-linking of FtsZ protofilaments. Its function overlaps with FtsA. This Frankia casuarinae (strain DSM 45818 / CECT 9043 / HFP020203 / CcI3) protein is Cell division protein SepF.